A 359-amino-acid chain; its full sequence is DNA replication and repair protein RecF (359 aa).

Residue 30 to 37 participates in ATP binding; the sequence is GPNGSGKT.

It belongs to the RecF family.

The protein resides in the cytoplasm. Its function is as follows. The RecF protein is involved in DNA metabolism; it is required for DNA replication and normal SOS inducibility. RecF binds preferentially to single-stranded, linear DNA. It also seems to bind ATP. This is DNA replication and repair protein RecF from Aliivibrio fischeri (strain ATCC 700601 / ES114) (Vibrio fischeri).